The primary structure comprises 621 residues: Kelch-like protein 40 (621 aa).

The BTB domain maps to leucine 33–glutamate 98. The 107-residue stretch at cysteine 133–glutamate 239 folds into the BACK domain. The disordered stretch occupies residues leucine 265 to glutamate 298. Residues glutamate 274–glutamate 284 show a composition bias toward basic and acidic residues. 5 Kelch repeats span residues glutamine 360–asparagine 412, alanine 413–aspartate 462, leucine 463–glycine 510, isoleucine 512–glycine 557, and leucine 559–leucine 613.

This sequence belongs to the KLHL40 family. In terms of assembly, component of the BCR(KLHL40) E3 ubiquitin ligase complex, at least composed of CUL3, KLHL40 and RBX1. Interacts with LMOD3. In terms of tissue distribution, specifically expressed in skeletal muscles in embryonic, neonatal and adults. Expressed in various types of muscles, including extensor digitorum longus, gastrocnemius, soleus, diaphragm, masseter and heart (at protein level). Not detected in brain, liver and lung (at protein level).

It is found in the cytoplasm. The protein resides in the myofibril. The protein localises to the sarcomere. It localises to the a band. Its subcellular location is the i band. In terms of biological role, substrate-specific adapter of a BCR (BTB-CUL3-RBX1) E3 ubiquitin ligase complex that acts as a key regulator of skeletal muscle development. The BCR(KLHL40) complex acts by mediating ubiquitination and degradation of TFDP1, thereby regulating the activity of the E2F:DP transcription factor complex. Promotes stabilization of LMOD3 by acting as a negative regulator of LMOD3 ubiquitination; the molecular process by which it negatively regulates ubiquitination of LMOD3 is however unclear. This is Kelch-like protein 40 from Mus musculus (Mouse).